The chain runs to 456 residues: Equilibrative nucleoside transporter 1 (456 aa).

The Cytoplasmic segment spans residues 2-12 (TTSHQPQDRYK). A helical membrane pass occupies residues 13-29 (AVWLIFFMLGLGTLLPW). Residues 30 to 82 (NFFMTATQYFTNRLDMSQNVSLVTAELSKDAQASAAPAAPLPERNSLSAIFNN) lie on the Extracellular side of the membrane. Asn-48 carries N-linked (GlcNAc...) asparagine glycosylation. The helical transmembrane segment at 83 to 107 (VMTLCAMLPLLLFTYLNSFLHQRIP) threads the bilayer. The Cytoplasmic portion of the chain corresponds to 108-111 (QSVR). Residues 112–130 (ILGSLVAILLVFLITAILV) form a helical membrane-spanning segment. At 131-138 (KVQLDALP) the chain is on the extracellular side. A helical transmembrane segment spans residues 139–157 (FFVITMIKIVLINSFGAIL). The Cytoplasmic segment spans residues 158 to 174 (QGSLFGLAGLLPASYTA). Residues 175 to 199 (PIMSGQGLAGFFASVAMICAIASGS) form a helical membrane-spanning segment. Residues 200–206 (ELSESAF) lie on the Extracellular side of the membrane. A helical transmembrane segment spans residues 207-227 (GYFITACAVIILTIICYLGLP). The Cytoplasmic segment spans residues 228 to 291 (RLEFYRYYQQ…IKAILKNISV (64 aa)). Phosphoserine occurs at positions 254, 269, and 273. Residues 254–266 (SKGEEPRAGKEES) are compositionally biased toward basic and acidic residues. Residues 254 to 276 (SKGEEPRAGKEESGVSVSNSQPT) form a disordered region. Residues 292–311 (LAFSVCFIFTITIGMFPAVT) traverse the membrane as a helical segment. The Extracellular segment spans residues 312-323 (VEVKSSIAGSST). Residues 324-342 (WERYFIPVSCFLTFNIFDW) traverse the membrane as a helical segment. The Cytoplasmic portion of the chain corresponds to 343–359 (LGRSLTAVFMWPGKDSR). A helical membrane pass occupies residues 360–378 (WLPSLVLARLVFVPLLLLC). Residues 379-393 (NIKPRRYLTVVFEHD) are Extracellular-facing. Residues 394–413 (AWFIFFMAAFAFSNGYLASL) traverse the membrane as a helical segment. The Cytoplasmic segment spans residues 414–431 (CMCFGPKKVKPAEAETAG). Residues 432 to 452 (AIMAFFLCLGLALGAVFSFLF) traverse the membrane as a helical segment. Over 453-456 (RAIV) the chain is Extracellular.

It belongs to the SLC29A/ENT transporter (TC 2.A.57) family. Identified in a complex with STOM. Glycosylated. In terms of tissue distribution, expressed in testis at the blood-testis barrier (at protein level). Detected in erythrocytes (at protein level). Expressed at relatively high levels in cerebral cortex, particularly the frontal and parietal lobes, and the thalamus and basal ganglia (at protein level). In the midbrain expressed at moderate levels, whereas in the other areas of the brainstem, namely medulla and pons, cerebellum and the hippocampus expressed at lower amounts when compared to the other brain regions (at protein level). Expressed in Langerhans cells and lymphocytes in the pancreas (at protein level). Expressed in kidney, in polarized renal epithelial cells. Expressed in adipose tissues. Expressed in placenta. Expressed in small intestine.

It localises to the basolateral cell membrane. Its subcellular location is the apical cell membrane. The protein localises to the cell membrane. The catalysed reaction is adenosine(in) = adenosine(out). It carries out the reaction guanosine(in) = guanosine(out). It catalyses the reaction inosine(in) = inosine(out). The enzyme catalyses uridine(out) = uridine(in). The catalysed reaction is thymidine(in) = thymidine(out). It carries out the reaction cytidine(in) = cytidine(out). It catalyses the reaction adenine(out) = adenine(in). The enzyme catalyses guanine(out) = guanine(in). The catalysed reaction is thymine(out) = thymine(in). It carries out the reaction uracil(in) = uracil(out). It catalyses the reaction hypoxanthine(out) = hypoxanthine(in). Transporter activity is sensitive to low concentrations of the inhibitor nitrobenzylmercaptopurine riboside (NBMPR). Inhibited by dilazep. Inhibited by dipyridamole. Inhibited by hypoxanthine. Inhibited by azidothymidine (AZT). Inhibited by dideoxycytidine (ddC). Inhibited by dideoxyinosine (ddI). Inhibited by draflazine. Inhibited by soluflazine. Inhibited by cladribine. Inhibited by capecitabine. Inhibited by clofarabine. Inhibited by ribavirin. Modestly inhibited by acyclovir. Modestly inhibited by 5-fluorouracil. Its function is as follows. Uniporter involved in the facilitative transport of nucleosides and nucleobases, and contributes to maintaining their cellular homeostasis. Functions as a Na(+)-independent transporter. Involved in the transport of nucleosides such as adenosine, guanosine, inosine, uridine, thymidine and cytidine. Also transports purine nucleobases (hypoxanthine, adenine, guanine) and pyrimidine nucleobases (thymine, uracil). Mediates basolateral nucleoside uptake into Sertoli cells, thereby regulating the transport of nucleosides in testis across the blood-testis barrier. Regulates inosine levels in brown adipocytes tissues (BAT) and extracellular inosine levels, which controls BAT-dependent energy expenditure. This Homo sapiens (Human) protein is Equilibrative nucleoside transporter 1.